We begin with the raw amino-acid sequence, 1004 residues long: Cadmium/zinc-transporting ATPase HMA3 (1004 aa).

The HMA domain maps to 42–108 (KKTYLDVLGV…ALNKAGLEAS (67 aa)). Transmembrane regions (helical) follow at residues 120–140 (RWPSPYIVASGVLLTASFFEW), 144–164 (PLQCLAVAAVVAGAPPMVRRG), 171–191 (LSLDINVLMLIAVAGALCLGD), 193–213 (TEAGAIVFLFTTAEWLETLAC), 340–360 (CAKYYTPAVVVVAAGVALIPA), 371–391 (WKLALVMLVSACPCALVLSTP), 683–703 (IAVNVAGSVAVKAAVLALAAA), and 707–727 (VLWAAVLADVGTCLLVVLNSM). Residues 931–952 (TGCGASKRSPPAEGSCSGGEGG) form a disordered region.

It belongs to the cation transport ATPase (P-type) (TC 3.A.3) family. Type IB subfamily. In terms of tissue distribution, specifically expressed in roots.

The protein resides in the vacuole membrane. The enzyme catalyses Zn(2+)(in) + ATP + H2O = Zn(2+)(out) + ADP + phosphate + H(+). It carries out the reaction Cd(2+)(in) + ATP + H2O = Cd(2+)(out) + ADP + phosphate + H(+). Functionally, root-specific cadmium (Cd) transporter that mediates Cd efflux in root vacuoles. Involved in Cd detoxification by sequestrating Cd into root vacuoles and limiting translocation of Cd from the roots to the shoots, and accumulation in grains. This chain is Cadmium/zinc-transporting ATPase HMA3, found in Oryza sativa subsp. japonica (Rice).